The following is a 27-amino-acid chain: uncharacterized protein (27 aa).

This is an uncharacterized protein from Archaeoglobus fulgidus (strain ATCC 49558 / DSM 4304 / JCM 9628 / NBRC 100126 / VC-16).